Here is a 229-residue protein sequence, read N- to C-terminus: Ribonuclease 3 (229 aa).

The RNase III domain maps to 5–127; it reads LDRLERKLGY…LIGAIYLDTG (123 aa). Mg(2+) is bound at residue E40. D44 is an active-site residue. Mg(2+) contacts are provided by D113 and E116. E116 is a catalytic residue. The region spanning 154 to 224 is the DRBM domain; the sequence is DPKTRLQEFL…AAAALVALGV (71 aa).

This sequence belongs to the ribonuclease III family. As to quaternary structure, homodimer. It depends on Mg(2+) as a cofactor.

The protein resides in the cytoplasm. The catalysed reaction is Endonucleolytic cleavage to 5'-phosphomonoester.. Digests double-stranded RNA. Involved in the processing of primary rRNA transcript to yield the immediate precursors to the large and small rRNAs (23S and 16S). Processes some mRNAs, and tRNAs when they are encoded in the rRNA operon. Processes pre-crRNA and tracrRNA of type II CRISPR loci if present in the organism. The sequence is that of Ribonuclease 3 from Pseudomonas paraeruginosa (strain DSM 24068 / PA7) (Pseudomonas aeruginosa (strain PA7)).